A 395-amino-acid polypeptide reads, in one-letter code: Putative 8-amino-7-oxononanoate synthase (395 aa).

R23 provides a ligand contact to substrate. A pyridoxal 5'-phosphate-binding site is contributed by 110–111; sequence GF. A substrate-binding site is contributed by H135. Pyridoxal 5'-phosphate-binding positions include S182, 207-210, and 239-242; these read DEAH and TFSK. The residue at position 242 (K242) is an N6-(pyridoxal phosphate)lysine. Residue T356 participates in substrate binding.

This sequence belongs to the class-II pyridoxal-phosphate-dependent aminotransferase family. BioF subfamily. In terms of assembly, homodimer. Pyridoxal 5'-phosphate serves as cofactor.

The enzyme catalyses 6-carboxyhexanoyl-[ACP] + L-alanine + H(+) = (8S)-8-amino-7-oxononanoate + holo-[ACP] + CO2. It participates in cofactor biosynthesis; biotin biosynthesis. In terms of biological role, catalyzes the decarboxylative condensation of pimeloyl-[acyl-carrier protein] and L-alanine to produce 8-amino-7-oxononanoate (AON), [acyl-carrier protein], and carbon dioxide. This Bacillus anthracis protein is Putative 8-amino-7-oxononanoate synthase (bioF).